A 456-amino-acid chain; its full sequence is 5-hydroxytryptamine receptor 3E (456 aa).

The N-terminal stretch at 1-25 (MEGSWFHRKRFSFYLLLGFLLQGRG) is a signal peptide. Residues 26–248 (VTFTINCSGF…FYVAIRRRPS (223 aa)) are Extracellular-facing. Cys-162 and Cys-176 are joined by a disulfide. Residue Asn-175 is glycosylated (N-linked (GlcNAc...) asparagine). A helical transmembrane segment spans residues 249 to 269 (LYVINLLVPSGFLVAIDALSF). Residues 270 to 282 (YLPVKSGNRVPFK) lie on the Cytoplasmic side of the membrane. Residues 283–303 (ITLLLGYNVFLLMMSDLLPTS) traverse the membrane as a helical segment. Residues 304 to 307 (GTPL) lie on the Extracellular side of the membrane. Residues 308–328 (IGVYFALCLSLMVGSLLETIF) traverse the membrane as a helical segment. The Cytoplasmic segment spans residues 329-433 (ITHLLHVATT…WLQFSHAMDA (105 aa)). Positions 401 to 432 (TGGSEWTRAQREHEAQKQHSVELWLQFSHAMD) are HA-stretch; determines single-channel conductance in 5-HT3 receptors. The helical transmembrane segment at 434 to 454 (MLFRLYLLFMASSIITVICLW) threads the bilayer. Residues 455–456 (NT) lie on the Extracellular side of the membrane.

It belongs to the ligand-gated ion channel (TC 1.A.9) family. 5-hydroxytryptamine receptor (TC 1.A.9.2) subfamily. HTR3E sub-subfamily. In terms of assembly, forms homopentameric as well as heteropentameric serotonin-activated cation-selective channel complexes with HTR3A. The homomeric complex is not functional. Heteropentameric complexes display properties which resemble that of neuronal serotonin-activated channels in vivo. Expressed in adult colon and intestine.

The protein resides in the postsynaptic cell membrane. Its subcellular location is the cell membrane. It catalyses the reaction Na(+)(in) = Na(+)(out). The catalysed reaction is K(+)(in) = K(+)(out). It carries out the reaction Ca(2+)(in) = Ca(2+)(out). Its function is as follows. Forms serotonin (5-hydroxytryptamine/5-HT3)-activated cation-selective channel complexes, which when activated cause fast, depolarizing responses in neurons. In Homo sapiens (Human), this protein is 5-hydroxytryptamine receptor 3E.